The chain runs to 440 residues: 23S rRNA (uracil(1939)-C(5))-methyltransferase RlmD (440 aa).

Residues 10-68 (KALPTQAVEITIDNLDHHLTGVGRYQGKACFVEGVLPGEKVSVQITEQKKQYAHARLRQ) form the TRAM domain. Positions 81, 87, 90, and 169 each coordinate [4Fe-4S] cluster. S-adenosyl-L-methionine is bound by residues Gln272, Phe301, Asn306, Glu322, Asp349, and Asp372. Cys398 (nucleophile) is an active-site residue.

The protein belongs to the class I-like SAM-binding methyltransferase superfamily. RNA M5U methyltransferase family. RlmD subfamily.

It carries out the reaction uridine(1939) in 23S rRNA + S-adenosyl-L-methionine = 5-methyluridine(1939) in 23S rRNA + S-adenosyl-L-homocysteine + H(+). In terms of biological role, catalyzes the formation of 5-methyl-uridine at position 1939 (m5U1939) in 23S rRNA. The sequence is that of 23S rRNA (uracil(1939)-C(5))-methyltransferase RlmD from Tolumonas auensis (strain DSM 9187 / NBRC 110442 / TA 4).